Here is a 1954-residue protein sequence, read N- to C-terminus: Integrin beta-like protein C (1954 aa).

A signal peptide spans 1-20; it reads MNKLFYLFILIASLFILTDA. The Extracellular segment spans residues 21 to 1883; that stretch reads SHFRFGTISW…TTTQTNDNKT (1863 aa). N-linked (GlcNAc...) asparagine glycans are attached at residues Asn-138 and Asn-354. The EGF-like domain occupies 428-465; that stretch reads YGENCVAVPPCVNGVPNSGINGDGKCLCSNGWTGADCS. Disulfide bonds link Cys-438-Cys-453 and Cys-455-Cys-464. Asn-479 is a glycosylation site (N-linked (GlcNAc...) asparagine). One can recognise a VWFA domain in the interval 521-706; sequence DVYVLVDANL…TGVKNVLSKI (186 aa). 9 N-linked (GlcNAc...) asparagine glycosylation sites follow: Asn-1348, Asn-1382, Asn-1628, Asn-1678, Asn-1742, Asn-1770, Asn-1820, Asn-1860, and Asn-1881. The helical transmembrane segment at 1884-1904 threads the bilayer; sequence VLTGAIAGAAAGTALIAAAAW. At 1905–1954 the chain is on the cytoplasmic side; sequence RLLRKAAPPTDTFFSEAAFLGDGVSSNPLYEQSASAAENPLYQSASDTTD.

It belongs to the SIB family. As to quaternary structure, interacts with talA/talin.

It is found in the membrane. Implicated in cellular adhesion. The polypeptide is Integrin beta-like protein C (sibC) (Dictyostelium discoideum (Social amoeba)).